The following is a 138-amino-acid chain: 2-amino-3-carboxymuconate-6-semialdehyde decarboxylase (138 aa).

His6 and His8 together coordinate Zn(2+). Position 47 (Arg47) interacts with substrate. The Zn(2+) site is built by His70 and Asp126.

The protein belongs to the metallo-dependent hydrolases superfamily. ACMSD family. Monomer.

It catalyses the reaction 2-amino-3-carboxymuconate 6-semialdehyde + H(+) = 2-aminomuconate 6-semialdehyde + CO2. It functions in the pathway secondary metabolite metabolism; quinolate metabolism. Its function is as follows. Converts alpha-amino-beta-carboxymuconate-epsilon-semialdehyde (ACMS) to alpha-aminomuconate semialdehyde (AMS). ACMS can be converted non-enzymatically to quinolate (QA), a key precursor of NAD, and a potent endogenous excitotoxin of neuronal cells which is implicated in the pathogenesis of various neurodegenerative disorders. In the presence of ACMSD, ACMS is converted to AMS, a benign catabolite. ACMSD ultimately controls the metabolic fate of tryptophan catabolism along the kynurenine pathway. The sequence is that of 2-amino-3-carboxymuconate-6-semialdehyde decarboxylase (ACMSD) from Sus scrofa (Pig).